We begin with the raw amino-acid sequence, 151 residues long: UPF0178 protein YaiI (151 aa).

The protein belongs to the UPF0178 family.

This is UPF0178 protein YaiI from Salmonella agona (strain SL483).